The following is an 83-amino-acid chain: Consomatin Rs1 (83 aa).

Positions 1–22 (MQTAYWVMVMMMVWITAPLSEG) are cleaved as a signal peptide. Residues 23–55 (GKLNNVIRGLVPDDVTPKRISQSLISRRRFDSR) constitute a propeptide that is removed on maturation. Residues Cys-62 and Cys-67 are joined by a disulfide bond. D-tryptophan is present on Trp-64. A 4-hydroxyproline modification is found at Pro-68. Residues 71–83 (LHGDNYDLKEKDK) constitute a propeptide that is removed on maturation.

The protein belongs to the conotoxin C superfamily. Consomatin family. Expressed by the venom duct.

The protein resides in the secreted. Its function is as follows. Moderately activates human somatostatin receptors (SSTR) with a preferential activation of SSTR1 and SSTR4. In vivo, does not cause behavioral changes in mice within a few minutes of intracranial injection, but causes a progressive loss of movement thereafter. Four to five hours after injection, mice recover, even with the highest dose tested. Shows antinociception and antihyperalgesia activities in two mouse models of acute pain, most probably by acting outside the central nervous system. The polypeptide is Consomatin Rs1 (Conus raulsilvai (Sea snail)).